We begin with the raw amino-acid sequence, 330 residues long: Ribose-phosphate pyrophosphokinase (330 aa).

ATP-binding positions include 40–42 (DGE) and 99–100 (RQ). Mg(2+) is bound by residues His133 and Asp174. Residue Lys197 is part of the active site. D-ribose 5-phosphate-binding positions include Arg199, Asp223, and 227 to 231 (DTGGT).

It belongs to the ribose-phosphate pyrophosphokinase family. Class I subfamily. Homohexamer. Mg(2+) is required as a cofactor.

Its subcellular location is the cytoplasm. It catalyses the reaction D-ribose 5-phosphate + ATP = 5-phospho-alpha-D-ribose 1-diphosphate + AMP + H(+). Its pathway is metabolic intermediate biosynthesis; 5-phospho-alpha-D-ribose 1-diphosphate biosynthesis; 5-phospho-alpha-D-ribose 1-diphosphate from D-ribose 5-phosphate (route I): step 1/1. Its function is as follows. Involved in the biosynthesis of the central metabolite phospho-alpha-D-ribosyl-1-pyrophosphate (PRPP) via the transfer of pyrophosphoryl group from ATP to 1-hydroxyl of ribose-5-phosphate (Rib-5-P). The protein is Ribose-phosphate pyrophosphokinase of Ureaplasma parvum serovar 3 (strain ATCC 700970).